Reading from the N-terminus, the 636-residue chain is Chitin synthase VI (636 aa).

The next 4 membrane-spanning stretches (helical) occupy residues 23 to 43 (LQWF…LFCI), 374 to 394 (TIRT…TTTA), 399 to 419 (LPVG…LYFG), and 427 to 447 (IWFY…YMVY). Residues 595–636 (QRLRLEQRPRTGPSLNARWQNGPQASETSQGRSQVDDVGIAF) are disordered. The span at 607–627 (PSLNARWQNGPQASETSQGRS) shows a compositional bias: polar residues.

The protein belongs to the chitin synthase family. Class VI subfamily. In terms of tissue distribution, moderately expressed during appressorium formation.

It localises to the cell membrane. It catalyses the reaction [(1-&gt;4)-N-acetyl-beta-D-glucosaminyl](n) + UDP-N-acetyl-alpha-D-glucosamine = [(1-&gt;4)-N-acetyl-beta-D-glucosaminyl](n+1) + UDP + H(+). Functionally, polymerizes chitin, a structural polymer of the cell wall and septum, by transferring the sugar moiety of UDP-GlcNAc to the non-reducing end of the growing chitin polymer. Contributes to the production of conidia but is the only chitine synthase that does not contribute to the ability of fungal conidia to germinate. Involved in fungal stress tolerances. In Metarhizium acridum (strain CQMa 102), this protein is Chitin synthase VI.